A 240-amino-acid polypeptide reads, in one-letter code: Uridylate kinase (240 aa).

13–16 (KFSG) serves as a coordination point for ATP. Glycine 55 contacts UMP. ATP contacts are provided by glycine 56 and arginine 60. UMP contacts are provided by residues aspartate 76 and 137-144 (TGNPFFTT). ATP is bound by residues threonine 164, tyrosine 170, and aspartate 173.

Belongs to the UMP kinase family. In terms of assembly, homohexamer.

It is found in the cytoplasm. The enzyme catalyses UMP + ATP = UDP + ADP. The protein operates within pyrimidine metabolism; CTP biosynthesis via de novo pathway; UDP from UMP (UMPK route): step 1/1. With respect to regulation, inhibited by UTP. Its function is as follows. Catalyzes the reversible phosphorylation of UMP to UDP. In Helicobacter pylori (strain HPAG1), this protein is Uridylate kinase.